Here is a 300-residue protein sequence, read N- to C-terminus: MKFLLDILLLLPLLIVCSLESFVKLFIPKRRKSVTGEIVLITGAGHGIGRLTAYEFAKLKSKLVLWDINKHGLEETAAKCKGLGAKVHTFVVDCSNREDIYSSAKKVKAEIGDVSILVNNAGVVYTSDLFATQDPQIEKTFEVNVLAHFWTTKAFLPAMTKNNHGHIVTVASAAGHVSVPFLLAYCSSKFAAVGFHKTLTDELAALQITGVKTTCLCPNFVNTGFIKNPSTSLGPTLEPEEVVNRLMHGILTEQKMIFIPSSIAFLTTLERILPERFLAVLKRKISVKFDAVIGYKMKAQ.

The signal sequence occupies residues 1–19; that stretch reads MKFLLDILLLLPLLIVCSL. Residue 40 to 64 coordinates NADP(+); that stretch reads LITGAGHGIGRLTAYEFAKLKSKLV. Serine 172 contacts substrate. Tyrosine 185 acts as the Proton acceptor in catalysis.

Belongs to the short-chain dehydrogenases/reductases (SDR) family. 17-beta-HSD 3 subfamily. Present at high level in steroidogenic cells such as syncytiotrophoblasts, sebaceous gland, Leydig cells, and granulosa cells of the dominant follicle and corpus luteum. In lung, it is detected in the ciliated epithelium and in acini of adult trachea, in bronchioles, but not in alveoli. In the eye, it is detected in the nonpigmented epithelium of the ciliary body and, at lower level, in the inner nuclear layer of the retina (at protein level). Widely expressed. Highly expressed in retina, pancreas, kidney, liver, lung, adrenal, small intestine, ovary and heart.

It localises to the endoplasmic reticulum. The protein localises to the lipid droplet. It catalyses the reaction 17beta-estradiol + NAD(+) = estrone + NADH + H(+). The catalysed reaction is 17beta-estradiol + NADP(+) = estrone + NADPH + H(+). Its function is as follows. Can convert androstan-3-alpha,17-beta-diol (3-alpha-diol) to androsterone in vitro, suggesting that it may participate in androgen metabolism during steroidogenesis. May act by metabolizing compounds that stimulate steroid synthesis and/or by generating metabolites that inhibit it. Has no activity toward DHEA (dehydroepiandrosterone), or A-dione (4-androste-3,17-dione), and only a slight activity toward testosterone to A-dione. Tumor-associated antigen in cutaneous T-cell lymphoma. The protein is Estradiol 17-beta-dehydrogenase 11 (HSD17B11) of Homo sapiens (Human).